The primary structure comprises 234 residues: Protein spitz (234 aa).

The N-terminal stretch at 1-28 is a signal peptide; that stretch reads MHSTMSVQHGLVALVLIGCLAHPWHVEA. Residues 29–143 lie on the Lumenal side of the membrane; it reads CSSRTVPKPR…RPRPMLEKAS (115 aa). Residues 33 to 71 form a disordered region; that stretch reads TVPKPRSSISSSMSGTALPPTQAPVTSSTTMRTTTTTTP. Over residues 56–71 the composition is skewed to low complexity; sequence PVTSSTTMRTTTTTTP. Residue N74 is glycosylated (N-linked (GlcNAc...) asparagine). Positions 78 to 122 constitute an EGF-like domain; the sequence is PTYKCPETFDAWYCLNDAHCFAVKIADLPVYSCECAIGFMGQRCE. 3 disulfides stabilise this stretch: C82–C97, C91–C110, and C112–C121. The chain crosses the membrane as a helical span at residues 144-164; it reads IASGAMCALVFMLFVCLAFYL. Residues 165 to 234 are Cytoplasmic-facing; sequence RFEQRAAKKA…SFAIRRSNKL (70 aa).

As to quaternary structure, interacts with Star via the lumenal domain. In terms of processing, proteolytic processing by Rhomboid occurs in the Golgi. Cleavage takes place within the transmembrane domain close to residue 144 and the active growth factor is released. N-glycosylated and O-glycosylated. As to expression, expressed throughout the embryo.

The protein localises to the cell membrane. The protein resides in the endoplasmic reticulum membrane. It localises to the golgi apparatus membrane. Its function is as follows. Ligand for the EGF receptor (Gurken). Involved in a number of unrelated developmental choices, for example, dorsal-ventral axis formation, glial migration, sensory organ determination, and muscle development. It is required for photoreceptor determination. This Drosophila melanogaster (Fruit fly) protein is Protein spitz (spi).